The sequence spans 304 residues: Protoheme IX farnesyltransferase (304 aa).

9 helical membrane passes run 31-51, 58-78, 99-119, 126-146, 154-174, 180-200, 222-242, 243-263, and 284-304; these read VNTLIVFCAVIGMFLAVPDGL, VAATLGIAFVAGAAAAMNCLI, LAPAETLLFAGVLGGTGLTVL, LTMWLTLATFVGYAVVYTVLL, IVIGGASGAMPPVLGWAAVTG, ALLLFLIIFAWTPPHFWALAL, FTRLSVLLYTCILFGVTLLPF, ATRMSGPLYLVCAVALGIGFL, and FSILYLFLLFAALLMDHYLPL.

The protein belongs to the UbiA prenyltransferase family. Protoheme IX farnesyltransferase subfamily.

Its subcellular location is the cell inner membrane. It catalyses the reaction heme b + (2E,6E)-farnesyl diphosphate + H2O = Fe(II)-heme o + diphosphate. Its pathway is porphyrin-containing compound metabolism; heme O biosynthesis; heme O from protoheme: step 1/1. Functionally, converts heme B (protoheme IX) to heme O by substitution of the vinyl group on carbon 2 of heme B porphyrin ring with a hydroxyethyl farnesyl side group. The protein is Protoheme IX farnesyltransferase of Aromatoleum aromaticum (strain DSM 19018 / LMG 30748 / EbN1) (Azoarcus sp. (strain EbN1)).